A 197-amino-acid chain; its full sequence is Small ribosomal subunit protein uS4A (197 aa).

The 75-residue stretch at 107–181 (RRLQTQVYKL…VARRNAARKA (75 aa)) folds into the S4 RNA-binding domain. Positions 160-197 (PTSPFGGARPGRVARRNAARKAEASGEAADEADEADEE) are disordered. Lys-180 participates in a covalent cross-link: Glycyl lysine isopeptide (Lys-Gly) (interchain with G-Cter in ubiquitin). At Ser-184 the chain carries Phosphoserine. The span at 187 to 197 (AADEADEADEE) shows a compositional bias: acidic residues.

The protein belongs to the universal ribosomal protein uS4 family. As to quaternary structure, component of the small ribosomal subunit (SSU). Mature yeast ribosomes consist of a small (40S) and a large (60S) subunit. The 40S small subunit contains 1 molecule of ribosomal RNA (18S rRNA) and 33 different proteins (encoded by 57 genes). The large 60S subunit contains 3 rRNA molecules (25S, 5.8S and 5S rRNA) and 46 different proteins (encoded by 81 genes). Interacts with snoRNA U3. uS11 interacts with MPP10. Component of the ribosomal small subunit (SSU) processome composed of at least 40 protein subunits and snoRNA U3.

It localises to the cytoplasm. It is found in the nucleus. The protein resides in the nucleolus. Functionally, component of the ribosome, a large ribonucleoprotein complex responsible for the synthesis of proteins in the cell. The small ribosomal subunit (SSU) binds messenger RNAs (mRNAs) and translates the encoded message by selecting cognate aminoacyl-transfer RNA (tRNA) molecules. The large subunit (LSU) contains the ribosomal catalytic site termed the peptidyl transferase center (PTC), which catalyzes the formation of peptide bonds, thereby polymerizing the amino acids delivered by tRNAs into a polypeptide chain. The nascent polypeptides leave the ribosome through a tunnel in the LSU and interact with protein factors that function in enzymatic processing, targeting, and the membrane insertion of nascent chains at the exit of the ribosomal tunnel. uS4 is involved in nucleolar processing of pre-18S ribosomal RNA and ribosome assembly. In Saccharomyces cerevisiae (strain ATCC 204508 / S288c) (Baker's yeast), this protein is Small ribosomal subunit protein uS4A.